A 71-amino-acid chain; its full sequence is Phosphatidylinositol N-acetylglucosaminyltransferase subunit Y (71 aa).

Topologically, residues 1–5 (MIRSL) are cytoplasmic. Residues 6–26 (PTMTVLIPLVSLAGLLYSASV) form a helical membrane-spanning segment. Residues 27-44 (EEGFPEGCTSASSLCFYS) lie on the Lumenal side of the membrane. Residues 45–65 (LLLPVTVPVYVFFHLWTWMGL) form a helical membrane-spanning segment. Over 66 to 71 (KLFRHN) the chain is Cytoplasmic.

In terms of assembly, component of the glycosylphosphatidylinositol-N-acetylglucosaminyltransferase (GPI-GnT) complex composed at least by PIGA, PIGC, PIGH, PIGP, PIGQ, PIGY and DPM2. Interacts directly with PIGA; this interaction regulates glycosylphosphatidylinositol-N-acetylglucosaminyltransferase activity. Does not interact with Ras proteins.

Its subcellular location is the endoplasmic reticulum membrane. It participates in glycolipid biosynthesis; glycosylphosphatidylinositol-anchor biosynthesis. Functionally, part of the glycosylphosphatidylinositol-N-acetylglucosaminyltransferase (GPI-GnT) complex that catalyzes the transfer of N-acetylglucosamine from UDP-N-acetylglucosamine to phosphatidylinositol and participates in the first step of GPI biosynthesis. May act by regulating the catalytic subunit PIGA. This chain is Phosphatidylinositol N-acetylglucosaminyltransferase subunit Y, found in Mus musculus (Mouse).